The primary structure comprises 144 residues: Small ribosomal subunit protein uS19 (144 aa).

The protein belongs to the universal ribosomal protein uS19 family.

Protein S19 forms a complex with S13 that binds strongly to the 16S ribosomal RNA. In Hyperthermus butylicus (strain DSM 5456 / JCM 9403 / PLM1-5), this protein is Small ribosomal subunit protein uS19.